The following is a 109-amino-acid chain: Hainantoxin-XVIII-7 (109 aa).

Positions 1–18 (MKLSIIIIATSLVIAVVA) are cleaved as a signal peptide. A propeptide spanning residues 19 to 46 (FPSKDSKAIENDKTEQRMEIVVQETARA) is cleaved from the precursor. Intrachain disulfides connect C47/C62, C55/C68, C59/C108, and C61/C81.

This sequence belongs to the neurotoxin 25 family. F7 subfamily. As to expression, expressed by the venom gland.

Its subcellular location is the secreted. Its function is as follows. Putative ion channel inhibitor. The protein is Hainantoxin-XVIII-7 of Cyriopagopus hainanus (Chinese bird spider).